We begin with the raw amino-acid sequence, 277 residues long: Inorganic pyrophosphatase (277 aa).

Residue Arg80 coordinates diphosphate. Mg(2+) contacts are provided by Asp117, Asp122, and Asp154.

It belongs to the PPase family. Requires Mg(2+) as cofactor.

The protein resides in the cytoplasm. The enzyme catalyses diphosphate + H2O = 2 phosphate + H(+). Functionally, involved in osmoadaptation. This Encephalitozoon cuniculi (strain GB-M1) (Microsporidian parasite) protein is Inorganic pyrophosphatase (IPP1).